The sequence spans 344 residues: Phenylalanine--tRNA ligase alpha subunit (344 aa).

Residue Glu259 coordinates Mg(2+).

This sequence belongs to the class-II aminoacyl-tRNA synthetase family. Phe-tRNA synthetase alpha subunit type 1 subfamily. In terms of assembly, tetramer of two alpha and two beta subunits. Mg(2+) is required as a cofactor.

It localises to the cytoplasm. It carries out the reaction tRNA(Phe) + L-phenylalanine + ATP = L-phenylalanyl-tRNA(Phe) + AMP + diphosphate + H(+). In Petrotoga mobilis (strain DSM 10674 / SJ95), this protein is Phenylalanine--tRNA ligase alpha subunit.